The primary structure comprises 225 residues: ATP-dependent dethiobiotin synthetase BioD (225 aa).

ATP is bound at residue 12-17; it reads EIGKTY. Thr16 is a binding site for Mg(2+). Residue Lys37 is part of the active site. A substrate-binding site is contributed by Ser41. ATP-binding positions include Asp55, 122-125, and 182-183; these read EGVG and SE. Mg(2+) contacts are provided by Asp55 and Glu122.

Belongs to the dethiobiotin synthetase family. In terms of assembly, homodimer. The cofactor is Mg(2+).

It is found in the cytoplasm. It catalyses the reaction (7R,8S)-7,8-diammoniononanoate + CO2 + ATP = (4R,5S)-dethiobiotin + ADP + phosphate + 3 H(+). It participates in cofactor biosynthesis; biotin biosynthesis; biotin from 7,8-diaminononanoate: step 1/2. Its function is as follows. Catalyzes a mechanistically unusual reaction, the ATP-dependent insertion of CO2 between the N7 and N8 nitrogen atoms of 7,8-diaminopelargonic acid (DAPA, also called 7,8-diammoniononanoate) to form a ureido ring. The sequence is that of ATP-dependent dethiobiotin synthetase BioD from Methylobacterium nodulans (strain LMG 21967 / CNCM I-2342 / ORS 2060).